The primary structure comprises 240 residues: Myomodulin neuropeptides 2 (240 aa).

The N-terminal stretch at 1-23 is a signal peptide; the sequence is MWKILETCSCFLVVAVLSGLGKA. A disordered region spans residues 23-44; sequence AQPESFSGSAVTDDSTSGANKR. A propeptide spanning residues 24 to 44 is cleaved from the precursor; the sequence is QPESFSGSAVTDDSTSGANKR. Residues 26–41 are compositionally biased toward polar residues; that stretch reads ESFSGSAVTDDSTSGA. Leucine amide is present on residues leucine 51 and leucine 60. 2 propeptides (connecting peptide) span residues 72–81 and 84–112; these read SGHQVPMLRA and GSPDTSGRLDANELYAVLSAILDEPRDQS. Position 81 is an alanine amide (alanine 81). Glutamine 115 carries the pyrrolidone carboxylic acid modification. Tyrosine amide is present on tyrosine 121. 10 propeptides (connecting peptide) span residues 124 to 147, 124 to 148, 124 to 149, 124 to 168, 131 to 168, 149 to 168, 150 to 168, 151 to 168, 171 to 190, and 171 to 199; these read DNNGVARDLLDALASDGESSSNFD, DNNGVARDLLDALASDGESSSNFDL, DNNGVARDLLDALASDGESSSNFDLL, DNNG…GGRY, DLLDALASDGESSSNFDLLSSLNNGPSYFRPAPRGGRY, LSSLNNGPSYFRPAPRGGRY, SSLNNGPSYFRPAPRGGRY, SLNNGPSYFRPAPRGGRY, SLPDAGPADYPSLEDYLVQS, and SLPDAGPADYPSLEDYLVQSRQFARPYSS. Isoleucine 207 is modified (isoleucine amide). The propeptide occupies 210-219; sequence FSGSPRLQAK. The segment at 212–240 is disordered; sequence GSPRLQAKAVPRPRIGRQESQMREAKSAE. Isoleucine 226 carries the isoleucine amide modification. The propeptide occupies 227-240; the sequence is GRQESQMREAKSAE. The span at 227–240 shows a compositional bias: basic and acidic residues; that stretch reads GRQESQMREAKSAE.

Expressed in the pedal-buccal projection neurons in the pedal ganglion.

The protein localises to the secreted. MMG2-DPs (Myomodulin gene 2-derived peptides) bias egestive feeding programs toward ingestive ones, and modulate accessory radula closer (ARC) muscle contractions. The polypeptide is Myomodulin neuropeptides 2 (MMG2) (Aplysia californica (California sea hare)).